We begin with the raw amino-acid sequence, 457 residues long: Hydrogenobyrinate a,c-diamide synthase (457 aa).

One can recognise a GATase cobBQ-type domain in the interval 255 to 441 (TVAIAAGRAF…LHTHPAATPG (187 aa)). C337 serves as the catalytic Nucleophile.

Belongs to the CobB/CbiA family. Requires Mg(2+) as cofactor.

The catalysed reaction is hydrogenobyrinate + 2 L-glutamine + 2 ATP + 2 H2O = hydrogenobyrinate a,c-diamide + 2 L-glutamate + 2 ADP + 2 phosphate + 2 H(+). It participates in cofactor biosynthesis; adenosylcobalamin biosynthesis; cob(II)yrinate a,c-diamide from precorrin-2 (aerobic route): step 9/10. In terms of biological role, catalyzes the ATP-dependent amidation of the two carboxylate groups at positions a and c of hydrogenobyrinate, using either L-glutamine or ammonia as the nitrogen source. This Mycobacterium bovis (strain ATCC BAA-935 / AF2122/97) protein is Hydrogenobyrinate a,c-diamide synthase.